Consider the following 381-residue polypeptide: Early boundary activity protein 2 (381 aa).

The interval 210–245 (NDAEDVPAPPSKRPRHMSTSSSESHIPDTASEKDEK) is disordered. The BEN domain occupies 268–365 (PNGTQITAHQ…TKCADTAKKY (98 aa)).

As to quaternary structure, the heterotrimeric Elba complex consists of Elba1, Elba2 and Elba3.

The protein localises to the nucleus. The heterotrimeric Elba complex is required for chromatin domain boundary function during early embryogenesis. It binds to a 8-bp sequence 5'-CCAATAAG-3' in the Fab-7 insulator or boundary element in the bithorax complex and contributes to its insulator or boundary activity. Elba2 can act as a transcriptional repressor and binds the palindromic sequence 5'-CCAATTGG-3' to mediate transcriptional repression. The sequence is that of Early boundary activity protein 2 from Drosophila melanogaster (Fruit fly).